Consider the following 160-residue polypeptide: MGVTKKPDLSDPVLRAKLAKGMGHNYYGEPAWPNDLLYIFPVCIFGTIACTVGLSVLEPVIVGEPANPFATPLEILPEWYFFPVFQILRTVPNKLLGVLLMAGVPVGLLTVPFIENVNKFQNPFRRPVATTVFLLGTVVAIWLGIGAALPIDTSLTLGLF.

Helical transmembrane passes span 36 to 56 (LLYI…GLSV), 95 to 115 (LLGV…PFIE), and 131 to 151 (TVFL…ALPI).

It belongs to the cytochrome b family. PetD subfamily. In terms of assembly, the 4 large subunits of the cytochrome b6-f complex are cytochrome b6, subunit IV (17 kDa polypeptide, petD), cytochrome f and the Rieske protein, while the 4 small subunits are petG, petL, petM and petN. The complex functions as a dimer.

The protein localises to the plastid. Its subcellular location is the chloroplast thylakoid membrane. In terms of biological role, component of the cytochrome b6-f complex, which mediates electron transfer between photosystem II (PSII) and photosystem I (PSI), cyclic electron flow around PSI, and state transitions. The polypeptide is Cytochrome b6-f complex subunit 4 (Chaetosphaeridium globosum (Charophycean green alga)).